The chain runs to 648 residues: Rho GTPase-activating protein 25 (648 aa).

A PH domain is found at 46-151 (RPIKVGWLKK…WVKFLRRVAG (106 aa)). The Rho-GAP domain occupies 160–354 (QRLDETVAYE…MMIRDHEVLF (195 aa)). Positions 356-559 (KSKDAPISPP…DLDSLQRTVQ (204 aa)) are disordered. Phosphoserine occurs at positions 363, 396, and 403. Polar residues predominate over residues 393-410 (RTDSFSNTASSPDATSPT). Residue Thr-407 is modified to Phosphothreonine. The span at 417–431 (QHQEDSGKAPRENPG) shows a compositional bias: basic and acidic residues. Composition is skewed to polar residues over residues 453–462 (SAFQGTTSSK) and 497–515 (DQRT…SQGN). Ser-537 bears the Phosphoserine mark. A coiled-coil region spans residues 540–641 (EAGSKNSGED…VKEFVKSMEK (102 aa)).

GTPase activator for the Rho-type GTPases by converting them to an inactive GDP-bound state. This chain is Rho GTPase-activating protein 25 (Arhgap25), found in Mus musculus (Mouse).